Consider the following 1377-residue polypeptide: DNA-directed RNA polymerase subunit beta' (1377 aa).

Residues cysteine 60, cysteine 62, cysteine 75, and cysteine 78 each contribute to the Zn(2+) site. Residues aspartate 449, aspartate 451, and aspartate 453 each contribute to the Mg(2+) site. Residues cysteine 777, cysteine 851, cysteine 858, and cysteine 861 each contribute to the Zn(2+) site.

The protein belongs to the RNA polymerase beta' chain family. As to quaternary structure, the RNAP catalytic core consists of 2 alpha, 1 beta, 1 beta' and 1 omega subunit. When a sigma factor is associated with the core the holoenzyme is formed, which can initiate transcription. Requires Mg(2+) as cofactor. Zn(2+) serves as cofactor.

It catalyses the reaction RNA(n) + a ribonucleoside 5'-triphosphate = RNA(n+1) + diphosphate. Its function is as follows. DNA-dependent RNA polymerase catalyzes the transcription of DNA into RNA using the four ribonucleoside triphosphates as substrates. This Borrelia recurrentis (strain A1) protein is DNA-directed RNA polymerase subunit beta'.